The sequence spans 535 residues: Calcium-dependent protein kinase 1 (535 aa).

The interval 1-34 (MGCNQSKSANDVRGNKVNNVNSKKKNNKREDIND) is disordered. Gly-2 carries the N-myristoyl glycine lipid modification. Cys-3 carries S-palmitoyl cysteine lipidation. Positions 57–324 (YFKVRKLGSG…AEEALNSRWI (268 aa)) constitute a Protein kinase domain. Residues 63–71 (LGSGAYGEV) and Lys-86 contribute to the ATP site. Ser-65 is modified (phosphoserine). Position 117 is a phosphoserine (Ser-117). Residue Asp-190 is the Proton acceptor of the active site. Ser-216 and Ser-219 each carry phosphoserine. Position 230 is a phosphothreonine (Thr-230). Position 334 is a phosphoserine (Ser-334). Residues 345 to 352 (NMRKFEGS) carry the J domain autoinhibitory motif motif. Residues 345 to 363 (NMRKFEGSQKLAQAAILFI) form a j domain region. Positions 353 to 363 (QKLAQAAILFI) match the J domain interacts with the EF-hand domains motif. EF-hand domains are found at residues 371–406 (EERK…LRNF), 415–450 (NVEE…KQIL), 451–486 (FSEE…GFYF), and 497–532 (VSEK…ICDN). 20 residues coordinate Ca(2+): Asp-384, Asn-386, Asp-388, Gln-390, Glu-395, Asp-428, Asp-430, Asn-432, Tyr-434, Glu-439, Asp-464, Asp-466, Ser-468, Lys-470, Glu-475, Asp-510, Asn-512, Asp-514, Met-516, and Glu-521.

It belongs to the protein kinase superfamily. Ser/Thr protein kinase family. CDPK subfamily. In terms of assembly, monomer. Mg(2+) is required as a cofactor. In terms of processing, myristoylated. Myristoylation and palmitoylation are required for the localization to the parasitophorous vacuole membrane. Palmitoylated. Palmitoylation increases in merozoites in response to low level of extracellular K(+) in the host blood. Myristoylation and palmitoylation are required for the localization to the parasitophorous vacuole membrane. Post-translationally, phosphorylation at Thr-230 may regulate CDPK1 kinase activity. Phosphorylation increases in response to an increase in intracellular Ca(2+) levels. Autophosphorylated in vitro. Autophosphorylation does not affect membrane localization in vitro.

It localises to the membrane. The protein resides in the cell membrane. Its subcellular location is the parasitophorous vacuole membrane. It is found in the cytoplasm. The protein localises to the cell projection. It localises to the cilium. The protein resides in the flagellum. Its subcellular location is the host cell membrane. The catalysed reaction is L-seryl-[protein] + ATP = O-phospho-L-seryl-[protein] + ADP + H(+). The enzyme catalyses L-threonyl-[protein] + ATP = O-phospho-L-threonyl-[protein] + ADP + H(+). With respect to regulation, activated by calcium. Upon calcium binding to the EF-hand domains, the C-terminus of the junction domain (J domain) undergoes a conformational change which results in the dissociation of the pseudo-substrate inhibitory motif from the catalytic domain. This, in turn may facilitate the autophosphorylation of the activation loop at Thr-230, which leads to the kinase activation. Its function is as follows. Calcium-dependent protein kinase which acts as a sensor and effector of intracellular Ca(2+) levels probably in part downstream of cGMP-activated PKG kinase. During the liver stage, involved in sporozoite motility and thus in sporozoite invasion of host hepatocytes, probably together with CDPK4 and CDPK5. In the mosquito midgut and during the last stage of male gamete exflagellation, may play a role in the rupture of the host erythrocyte membrane. In the mosquito midgut, required for the differentiation of the zygote into the ookinete by promoting the translational activation of a subset of repressed mRNAs; these mRNAs are kept repressed in the zygote by the DOZI- or CITH-containing mRNP complexes. Dispensable during the asexual blood stage. This is Calcium-dependent protein kinase 1 from Plasmodium yoelii yoelii.